A 185-amino-acid polypeptide reads, in one-letter code: Threonylcarbamoyl-AMP synthase (185 aa).

In terms of domain architecture, YrdC-like spans 4–185 (SWRVQQAARE…LATGEIVRPG (182 aa)).

It belongs to the SUA5 family. TsaC subfamily.

Its subcellular location is the cytoplasm. It catalyses the reaction L-threonine + hydrogencarbonate + ATP = L-threonylcarbamoyladenylate + diphosphate + H2O. Its function is as follows. Required for the formation of a threonylcarbamoyl group on adenosine at position 37 (t(6)A37) in tRNAs that read codons beginning with adenine. Catalyzes the conversion of L-threonine, HCO(3)(-)/CO(2) and ATP to give threonylcarbamoyl-AMP (TC-AMP) as the acyladenylate intermediate, with the release of diphosphate. This chain is Threonylcarbamoyl-AMP synthase, found in Pseudomonas putida (strain W619).